Here is a 419-residue protein sequence, read N- to C-terminus: Ribosome biogenesis protein WDR12 homolog (419 aa).

Residues 10 to 91 form a ubiquitin-like (UBL) domain region; the sequence is VQVHLKTKQE…EDAIEIEYVE (82 aa). WD repeat units lie at residues 103 to 141, 142 to 184, 191 to 230, 249 to 287, 289 to 328, 334 to 374, and 378 to 416; these read LHDD…LTIP, GHTA…NTVE, GHER…AGEG, GHRE…IKAE, STNK…GSVV, GHNA…APLY, and GHGE…VENM.

The protein belongs to the WD repeat WDR12/YTM1 family.

The protein resides in the nucleus. It is found in the nucleolus. The protein localises to the nucleoplasm. Required for maturation of ribosomal RNAs and formation of the large ribosomal subunit. In Drosophila persimilis (Fruit fly), this protein is Ribosome biogenesis protein WDR12 homolog.